The primary structure comprises 387 residues: Phosphoglycerate kinase (387 aa).

Substrate contacts are provided by residues 21-23 (DLN), R36, 59-62 (HLGR), R113, and R146. Residues K197, E314, and 340–343 (GGDT) each bind ATP.

This sequence belongs to the phosphoglycerate kinase family. Monomer.

The protein resides in the cytoplasm. It catalyses the reaction (2R)-3-phosphoglycerate + ATP = (2R)-3-phospho-glyceroyl phosphate + ADP. Its pathway is carbohydrate degradation; glycolysis; pyruvate from D-glyceraldehyde 3-phosphate: step 2/5. This chain is Phosphoglycerate kinase, found in Pseudomonas putida (strain ATCC 700007 / DSM 6899 / JCM 31910 / BCRC 17059 / LMG 24140 / F1).